A 321-amino-acid polypeptide reads, in one-letter code: Probable pectate lyase A (321 aa).

The signal sequence occupies residues 1 to 20 (MANFKLFLALAACLSGQALA). N-linked (GlcNAc...) asparagine glycosylation is present at Asn-93. Residues Asp-134, Asp-163, and Asp-167 each contribute to the Ca(2+) site. Residue Arg-220 is part of the active site.

The protein belongs to the polysaccharide lyase 1 family. The cofactor is Ca(2+).

It is found in the secreted. The enzyme catalyses Eliminative cleavage of (1-&gt;4)-alpha-D-galacturonan to give oligosaccharides with 4-deoxy-alpha-D-galact-4-enuronosyl groups at their non-reducing ends.. In terms of biological role, pectinolytic enzyme consist of four classes of enzymes: pectin lyase, polygalacturonase, pectin methylesterase and rhamnogalacturonase. Among pectinolytic enzymes, pectin lyase is the most important in depolymerization of pectin, since it cleaves internal glycosidic bonds of highly methylated pectins. Favors pectate, the anion, over pectin, the methyl ester. This chain is Probable pectate lyase A (plyA), found in Aspergillus flavus (strain ATCC 200026 / FGSC A1120 / IAM 13836 / NRRL 3357 / JCM 12722 / SRRC 167).